We begin with the raw amino-acid sequence, 144 residues long: MLMPKRVKYRKQQRGRIKGNATRGNTLTYGEYGLQALEPGWITATQIEAARVAMTRYIKRGGKVWIKIFPDKPVTKKPAETRMGSGKGSPEFWVAVVKPGRVLFEIGGVSEDVAKEALRLAMHKLPIKTKFLKREELGGESNES.

It belongs to the universal ribosomal protein uL16 family. In terms of assembly, part of the 50S ribosomal subunit.

Binds 23S rRNA and is also seen to make contacts with the A and possibly P site tRNAs. The protein is Large ribosomal subunit protein uL16 of Caldanaerobacter subterraneus subsp. tengcongensis (strain DSM 15242 / JCM 11007 / NBRC 100824 / MB4) (Thermoanaerobacter tengcongensis).